A 292-amino-acid chain; its full sequence is Phosphatidylglycerol--prolipoprotein diacylglyceryl transferase (292 aa).

Helical transmembrane passes span 7–27, 45–65, 83–103, and 116–136; these read IILSVVIILAVGIGLFFFLRE, FQLRWYSICIASGILVAYVLA, LFWGIVAGILGARIYYVIFNW, and IWHGGLAIHGGIFGALLMIFI. Arg-165 serves as a coordination point for a 1,2-diacyl-sn-glycero-3-phospho-(1'-sn-glycerol). 2 helical membrane-spanning segments follow: residues 204–224 and 264–284; these read PTFLYESLWDITIFVFLYFFV and AAQVVSIILIFIGAAWYAYII.

Belongs to the Lgt family.

The protein localises to the cell inner membrane. The catalysed reaction is L-cysteinyl-[prolipoprotein] + a 1,2-diacyl-sn-glycero-3-phospho-(1'-sn-glycerol) = an S-1,2-diacyl-sn-glyceryl-L-cysteinyl-[prolipoprotein] + sn-glycerol 1-phosphate + H(+). The protein operates within protein modification; lipoprotein biosynthesis (diacylglyceryl transfer). Functionally, catalyzes the transfer of the diacylglyceryl group from phosphatidylglycerol to the sulfhydryl group of the N-terminal cysteine of a prolipoprotein, the first step in the formation of mature lipoproteins. The sequence is that of Phosphatidylglycerol--prolipoprotein diacylglyceryl transferase from Fervidobacterium nodosum (strain ATCC 35602 / DSM 5306 / Rt17-B1).